We begin with the raw amino-acid sequence, 556 residues long: Calcium-dependent protein kinase 5 (556 aa).

A disordered region spans residues 1–40 (MGNSCRGSFKDKLDEGDNNKPEDYSKTSTTNLSSNSDHSP). The N-myristoyl glycine moiety is linked to residue Gly-2. Over residues 8-25 (SFKDKLDEGDNNKPEDYS) the composition is skewed to basic and acidic residues. Over residues 26-39 (KTSTTNLSSNSDHS) the composition is skewed to low complexity. A Protein kinase domain is found at 97 to 355 (YTLSRKLGQG…AHEVLRHPWI (259 aa)). Residues 103 to 111 (LGQGQFGTT) and Lys-126 contribute to the ATP site. The active-site Proton acceptor is Asp-221. Ser-261 carries the post-translational modification Phosphoserine. The tract at residues 361 to 391 (APDRALDPAVLSRLKQFSAMNKLKKMALKVI) is autoinhibitory domain. EF-hand domains follow at residues 398-433 (EEIA…YGST), 434-469 (LKDT…LNKL), 470-505 (EREE…HGMA), and 509-539 (LEDI…GNAG). The Ca(2+) site is built by Asp-411, Asp-413, Ser-415, Glu-422, Asp-447, Asp-449, Ser-451, Thr-453, Glu-458, Asp-483, Asp-485, Ser-487, Glu-494, Asp-517, Asn-519, Asp-521, Lys-523, and Glu-528.

The protein belongs to the protein kinase superfamily. Ser/Thr protein kinase family. CDPK subfamily.

The protein resides in the membrane. The catalysed reaction is L-seryl-[protein] + ATP = O-phospho-L-seryl-[protein] + ADP + H(+). It carries out the reaction L-threonyl-[protein] + ATP = O-phospho-L-threonyl-[protein] + ADP + H(+). Its activity is regulated as follows. Activated by calcium. Autophosphorylation may play an important role in the regulation of the kinase activity. Functionally, may play a role in signal transduction pathways that involve calcium as a second messenger. The protein is Calcium-dependent protein kinase 5 (CPK5) of Arabidopsis thaliana (Mouse-ear cress).